The primary structure comprises 330 residues: Zinc finger protein Gfi-1b (330 aa).

Residues 1 to 20 are SNAG domain; it reads MPRSFLVKSKKAHTYHQPRA. Disordered regions lie at residues 1–21 and 75–99; these read MPRS…PRAQ and MASA…SESP. N6,N6-dimethyllysine is present on Lys-8. The tract at residues 91–330 is interaction with ARIH2; that stretch reads GESPLSESPP…RHRESQHNLK (240 aa). 6 consecutive C2H2-type zinc fingers follow at residues 163-186, 192-214, 220-242, 248-270, 276-298, and 304-327; these read YHCV…RRSH, FACD…THVH, FECR…LLIH, YPCQ…TYIH, HKCQ…SRKH, and FSCE…ESQH. A mediates interaction with GATA1 region spans residues 164-330; it reads HCVKCNKVFS…RHRESQHNLK (167 aa).

Interacts with histone methyltransferases EHMT2 and SUV39H1. Interacts with ARIH2 (via RING-type 2) and with RUNX1T1. Forms a complex with GATA1. Component of a RCOR-GFI-KDM1A-HDAC complex. Interacts directly with RCOR1, KDM1A and HDAC2. In terms of processing, methylation at Lys-8 in the SNAG domain seems required for the recruitment of the corepressor complex. In terms of tissue distribution, expressed in bone marrow and in spleen. Detected in hematopoietic stem cells, erythroblasts, and megakaryocytes. Expressed in thymocytes.

It localises to the nucleus. Essential proto-oncogenic transcriptional regulator necessary for development and differentiation of erythroid and megakaryocytic lineages. Component of a RCOR-GFI-KDM1A-HDAC complex that suppresses, via histone deacetylase (HDAC) recruitment, a number of genes implicated in multilineage blood cell development and controls hematopoietic differentiation. Transcriptional repressor or activator depending on both promoter and cell type context; represses promoter activity of SOCS1 and SOCS3 and thus, may regulate cytokine signaling pathways. Cooperates with GATA1 to repress target gene transcription, such as the apoptosis regulator BCL2L1; GFI1B silencing in leukemic cell lines markedly increase apoptosis rate. Inhibits down-regulation of MYC and MYB as well as the cyclin-dependent kinase inhibitor CDKN1A/P21WAF1 in IL6-treated myelomonocytic cells. Represses expression of GATA3 in T-cell lymphomas and inhibits GATA1-mediated transcription; as GATA1 also mediates erythroid GFI1B transcription, both GATA1 and GFI1B participate in a feedback regulatory pathway controlling the expression of GFI1B gene in erythroid cells. Suppresses GATA1-mediated stimulation of GFI1B promoter through protein interaction. Binds to gamma-satellite DNA and to its own promoter, auto-repressing its own expression. Alters histone methylation by recruiting histone methyltransferase to target genes promoters. Plays a role in heterochromatin formation. In Mus musculus (Mouse), this protein is Zinc finger protein Gfi-1b (Gfi1b).